The sequence spans 359 residues: Structure-specific endonuclease subunit SLX1 homolog (359 aa).

Positions 9–91 constitute a GIY-YIG domain; that stretch reads GLFACYCLVA…TYPTRSRYVN (83 aa). The segment at 192-238 adopts an SLX1-type zinc-finger fold; sequence CPICQDGVSPSNVQCMQCSARFCITCAGKLFTRRNTLIPCFGKCPIC. Residues 256–359 form a disordered region; that stretch reads VAGRKSVPHK…LPSDVISITD (104 aa). Residues 269–281 are compositionally biased toward polar residues; the sequence is VDGQSSLSQNSSY. The span at 295 to 306 shows a compositional bias: basic and acidic residues; the sequence is EPEKDDISRDES. Low complexity predominate over residues 316–326; that stretch reads SSVALSDSSRS.

It belongs to the SLX1 family. As to quaternary structure, forms a heterodimer with a member of the SLX4 family. It depends on a divalent metal cation as a cofactor.

Its subcellular location is the nucleus. In terms of biological role, catalytic subunit of a heterodimeric structure-specific endonuclease that resolves DNA secondary structures generated during DNA repair and recombination. Has endonuclease activity towards branched DNA substrates, introducing single-strand cuts in duplex DNA close to junctions with ss-DNA. In Giardia intestinalis (strain ATCC 50803 / WB clone C6) (Giardia lamblia), this protein is Structure-specific endonuclease subunit SLX1 homolog.